The following is a 333-amino-acid chain: HTH-type transcriptional regulator CbbR (333 aa).

Residues 5 to 62 (WTLRQLRLVALAAASGSYAKAAQDMGLSPPAVTAQMKALEEDIGVPMFERVDGRLRPT) form the HTH lysR-type domain. Residues 22–41 (YAKAAQDMGLSPPAVTAQMK) constitute a DNA-binding region (H-T-H motif).

It belongs to the LysR transcriptional regulatory family.

Transcriptional activator for the cbb operon (cbbLSXFP) for RuBisCO and other Calvin cycle genes. Binds specifically to two binding sites in the cbbR-cbbL intergenic region. The chain is HTH-type transcriptional regulator CbbR (cbbR) from Xanthobacter flavus.